Reading from the N-terminus, the 353-residue chain is Diacetylchitobiose uptake system permease protein NgcF (353 aa).

Residues 1–24 (MKDTIPTAETASRRPEPAARGGRP) form a disordered region. 6 consecutive transmembrane segments (helical) span residues 36-56 (FFLA…LIPF), 100-120 (LLAA…AVAI), 141-161 (IISF…WAQM), 197-217 (VMFV…IAAI), 254-274 (AYIY…AMVP), and 303-323 (TAMG…VFLV). The ABC transmembrane type-1 domain maps to 95–320 (LRNVALLAAF…AVTLVFAALV (226 aa)). The interval 329–353 (GGEGESKRKAPGSRARRAAAKGGAR) is disordered. Residues 337-353 (KAPGSRARRAAAKGGAR) are compositionally biased toward basic residues.

Belongs to the binding-protein-dependent transport system permease family. As to quaternary structure, the complex is composed of two ATP-binding proteins (MsiK), two transmembrane proteins (NgcF and NgcG) and a solute-binding protein (NgcE).

The protein localises to the cell membrane. Functionally, part of the ABC transporter complex NgcEFG-MsiK involved in N,N'-diacetylchitobiose ((GlcNAc)2) uptake. Responsible for the translocation of the substrate across the membrane. The sequence is that of Diacetylchitobiose uptake system permease protein NgcF from Streptomyces coelicolor (strain ATCC BAA-471 / A3(2) / M145).